Here is a 642-residue protein sequence, read N- to C-terminus: Regulator of MON1-CCZ1 complex (642 aa).

A Mic1 domain is found at 462-616 (RPYTESILML…KLYETLSFPK (155 aa)).

It belongs to the RMC1 family. As to quaternary structure, component of the Mon1-Ccz1 guanyl-nucleotide exchange factor complex made up of Mon1, Ccz1 and Bulli; the interaction of Bulli with the Mon1-Ccz1 heterodimer is mediated via the C-terminal Mic1 domain of Bulli. Mon1 and Ccz1 form a stable complex which displays Rab7 GEF activity with or without Bulli; GEF activity is enhanced by Bulli possibly by improving membrane association of the complex.

Its subcellular location is the late endosome. Its function is as follows. Positive regulator of the Rab7 guanyl-nucleotide exchange activity of the Mon1-Ccz1 complex, possibly by enhancing its endosomal membrane association. As part of the Mon1-Ccz1 complex involved in endolysosomal biogenesis possibly by mediating Rab conversion, the replacement of Rab5 with Rab7 during late endosome maturation. This Drosophila melanogaster (Fruit fly) protein is Regulator of MON1-CCZ1 complex.